Here is a 336-residue protein sequence, read N- to C-terminus: Protein-glutamate methylesterase/protein-glutamine glutaminase 3 (336 aa).

The 118-residue stretch at 2–119 (KIAIVNDMPM…PNPKEAAAPL (118 aa)) folds into the Response regulatory domain. 4-aspartylphosphate is present on Asp53. The 190-residue stretch at 147-336 (PARRDRLVAI…APRLVEVFTQ (190 aa)) folds into the CheB-type methylesterase domain. Catalysis depends on residues Ser159, His186, and Asp279.

Belongs to the CheB family. Post-translationally, phosphorylated by CheA. Phosphorylation of the N-terminal regulatory domain activates the methylesterase activity.

The protein resides in the cytoplasm. It catalyses the reaction [protein]-L-glutamate 5-O-methyl ester + H2O = L-glutamyl-[protein] + methanol + H(+). The enzyme catalyses L-glutaminyl-[protein] + H2O = L-glutamyl-[protein] + NH4(+). In terms of biological role, involved in chemotaxis. Part of a chemotaxis signal transduction system that modulates chemotaxis in response to various stimuli. Catalyzes the demethylation of specific methylglutamate residues introduced into the chemoreceptors (methyl-accepting chemotaxis proteins or MCP) by CheR. Also mediates the irreversible deamidation of specific glutamine residues to glutamic acid. The polypeptide is Protein-glutamate methylesterase/protein-glutamine glutaminase 3 (Pseudomonas savastanoi pv. phaseolicola (strain 1448A / Race 6) (Pseudomonas syringae pv. phaseolicola (strain 1448A / Race 6))).